We begin with the raw amino-acid sequence, 508 residues long: uncharacterized protein (508 aa).

12 consecutive transmembrane segments (helical) span residues 65-87 (IFPV…SYAV), 104-124 (WSGT…SLLL), 136-156 (FLVI…PGFI), 160-180 (VLLG…TAQW), 192-212 (VWVA…YGLA), 224-244 (LIFI…LAVV), 292-312 (TWIM…IGTF), 333-353 (LPAG…SLFI), 357-377 (MVLA…LSFA), 384-404 (LAGY…FAII), 416-436 (TVGV…PQTF), and 450-470 (TMVG…YVNW).

Belongs to the major facilitator superfamily. Allantoate permease family.

Its subcellular location is the endoplasmic reticulum. The protein localises to the golgi apparatus. It is found in the membrane. This is an uncharacterized protein from Schizosaccharomyces pombe (strain 972 / ATCC 24843) (Fission yeast).